Reading from the N-terminus, the 1051-residue chain is Putative helicase/primase complex protein (1051 aa).

It belongs to the asfivirus F1055L family.

Functionally, may be involved in DNA replication. This Ornithodoros (relapsing fever ticks) protein is Putative helicase/primase complex protein.